The following is a 670-amino-acid chain: DNA ligase (670 aa).

Residues 36–40 (DEEYD), 84–85 (SL), and glutamate 116 contribute to the NAD(+) site. Catalysis depends on lysine 118, which acts as the N6-AMP-lysine intermediate. Positions 139, 177, 293, and 317 each coordinate NAD(+). 4 residues coordinate Zn(2+): cysteine 411, cysteine 414, cysteine 429, and cysteine 434. Residues 594-670 (KKPSPLKGLT…SYEEFLKMLE (77 aa)) form the BRCT domain.

This sequence belongs to the NAD-dependent DNA ligase family. LigA subfamily. It depends on Mg(2+) as a cofactor. Mn(2+) is required as a cofactor.

It carries out the reaction NAD(+) + (deoxyribonucleotide)n-3'-hydroxyl + 5'-phospho-(deoxyribonucleotide)m = (deoxyribonucleotide)n+m + AMP + beta-nicotinamide D-nucleotide.. Functionally, DNA ligase that catalyzes the formation of phosphodiester linkages between 5'-phosphoryl and 3'-hydroxyl groups in double-stranded DNA using NAD as a coenzyme and as the energy source for the reaction. It is essential for DNA replication and repair of damaged DNA. In Thermodesulfovibrio yellowstonii (strain ATCC 51303 / DSM 11347 / YP87), this protein is DNA ligase.